The primary structure comprises 309 residues: Ribonuclease Z (309 aa).

Zn(2+) is bound by residues His63, His65, Asp67, His68, His145, Asp216, and His274. Asp67 functions as the Proton acceptor in the catalytic mechanism.

The protein belongs to the RNase Z family. As to quaternary structure, homodimer. The cofactor is Zn(2+).

The enzyme catalyses Endonucleolytic cleavage of RNA, removing extra 3' nucleotides from tRNA precursor, generating 3' termini of tRNAs. A 3'-hydroxy group is left at the tRNA terminus and a 5'-phosphoryl group is left at the trailer molecule.. Functionally, zinc phosphodiesterase, which displays some tRNA 3'-processing endonuclease activity. Probably involved in tRNA maturation, by removing a 3'-trailer from precursor tRNA. This chain is Ribonuclease Z, found in Streptococcus pneumoniae serotype 19F (strain G54).